The sequence spans 134 residues: Protein NrdI (134 aa).

This sequence belongs to the NrdI family.

Its function is as follows. Probably involved in ribonucleotide reductase function. This Serratia proteamaculans (strain 568) protein is Protein NrdI.